A 318-amino-acid polypeptide reads, in one-letter code: NADH-ubiquinone oxidoreductase chain 1 (318 aa).

Transmembrane regions (helical) follow at residues 2 to 22 (FLMN…FLTL), 37 to 57 (PNIV…KLFI), 69 to 89 (LMFT…WIPM), 100 to 120 (LGVL…LWSG), 136 to 156 (VAQT…IMMM), 171 to 191 (HMWL…STLA), 231 to 251 (IIMM…NPLF), 253 to 273 (ELFT…FLWV), and 293 to 313 (FLPL…LSAG).

The protein belongs to the complex I subunit 1 family. In terms of assembly, core subunit of respiratory chain NADH dehydrogenase (Complex I) which is composed of 45 different subunits.

It is found in the mitochondrion inner membrane. The catalysed reaction is a ubiquinone + NADH + 5 H(+)(in) = a ubiquinol + NAD(+) + 4 H(+)(out). Functionally, core subunit of the mitochondrial membrane respiratory chain NADH dehydrogenase (Complex I) which catalyzes electron transfer from NADH through the respiratory chain, using ubiquinone as an electron acceptor. Essential for the catalytic activity and assembly of complex I. The polypeptide is NADH-ubiquinone oxidoreductase chain 1 (MT-ND1) (Euphractus sexcinctus (Six-banded armadillo)).